Reading from the N-terminus, the 277-residue chain is Thymidylate synthase (277 aa).

A dUMP-binding site is contributed by Arg21. Residue His51 coordinates (6R)-5,10-methylene-5,6,7,8-tetrahydrofolate. 139–140 (RR) contacts dUMP. Cys159 serves as the catalytic Nucleophile. DUMP is bound by residues 179 to 182 (RSAD), Asn190, and 220 to 222 (HIY). Asp182 provides a ligand contact to (6R)-5,10-methylene-5,6,7,8-tetrahydrofolate. Ala276 provides a ligand contact to (6R)-5,10-methylene-5,6,7,8-tetrahydrofolate.

This sequence belongs to the thymidylate synthase family. Bacterial-type ThyA subfamily. In terms of assembly, homodimer.

The protein localises to the cytoplasm. It carries out the reaction dUMP + (6R)-5,10-methylene-5,6,7,8-tetrahydrofolate = 7,8-dihydrofolate + dTMP. Its pathway is pyrimidine metabolism; dTTP biosynthesis. In terms of biological role, catalyzes the reductive methylation of 2'-deoxyuridine-5'-monophosphate (dUMP) to 2'-deoxythymidine-5'-monophosphate (dTMP) while utilizing 5,10-methylenetetrahydrofolate (mTHF) as the methyl donor and reductant in the reaction, yielding dihydrofolate (DHF) as a by-product. This enzymatic reaction provides an intracellular de novo source of dTMP, an essential precursor for DNA biosynthesis. The protein is Thymidylate synthase of Ruegeria sp. (strain TM1040) (Silicibacter sp.).